The following is a 40-amino-acid chain: Omega-conotoxin RsXXVIA (40 aa).

Post-translationally, contains 4 disulfide bonds. In terms of tissue distribution, expressed by the venom duct.

The protein resides in the secreted. Its function is as follows. Omega-conotoxins act at presynaptic membranes, they bind and block voltage-gated calcium channels (Cav). This toxin inhibits rat Cav2.2/CACNA1B calcium channels in a dose-dependent manner (EC(50)=2.8 uM), whose effect is partially reversed after washing. In vivo, when injected into mice, it shows both an analgesic effect in acute thermal pain at 30 and 45 minutes post-injection and an anti-nociceptive effect in a formalin chronic pain test. The polypeptide is Omega-conotoxin RsXXVIA (Conus regularis (Regular cone)).